A 205-amino-acid polypeptide reads, in one-letter code: Holliday junction branch migration complex subunit RuvA (205 aa).

Residues 1–64 form a domain I region; the sequence is MIGRLRGIIL…EDAQLLFGFI (64 aa). The interval 65–143 is domain II; the sequence is HKQERVLFRE…GLSGDLFVPQ (79 aa). Residues 144–156 are flexible linker; that stretch reads GAGEIPAAIDAPA. The domain III stretch occupies residues 157-205; sequence MPADPEGEAVAALVALGYKPQEASRMVSKVASAGSDCEMLIRDALRAAL.

The protein belongs to the RuvA family. In terms of assembly, homotetramer. Forms an RuvA(8)-RuvB(12)-Holliday junction (HJ) complex. HJ DNA is sandwiched between 2 RuvA tetramers; dsDNA enters through RuvA and exits via RuvB. An RuvB hexamer assembles on each DNA strand where it exits the tetramer. Each RuvB hexamer is contacted by two RuvA subunits (via domain III) on 2 adjacent RuvB subunits; this complex drives branch migration. In the full resolvosome a probable DNA-RuvA(4)-RuvB(12)-RuvC(2) complex forms which resolves the HJ.

The protein localises to the cytoplasm. Functionally, the RuvA-RuvB-RuvC complex processes Holliday junction (HJ) DNA during genetic recombination and DNA repair, while the RuvA-RuvB complex plays an important role in the rescue of blocked DNA replication forks via replication fork reversal (RFR). RuvA specifically binds to HJ cruciform DNA, conferring on it an open structure. The RuvB hexamer acts as an ATP-dependent pump, pulling dsDNA into and through the RuvAB complex. HJ branch migration allows RuvC to scan DNA until it finds its consensus sequence, where it cleaves and resolves the cruciform DNA. This is Holliday junction branch migration complex subunit RuvA from Sodalis glossinidius (strain morsitans).